The chain runs to 163 residues: Anthranilate 1,2-dioxygenase small subunit (163 aa).

The protein belongs to the bacterial ring-hydroxylating dioxygenase beta subunit family. In terms of assembly, the anthranilate dioxygenase (AntDO) multicomponent enzyme system is composed of an oxygenase component and a NADH:acceptor reductase component (AntC). The oxygenase component is a heterohexamer of 3 large (AntA) and 3 small (AntB) subunits.

The catalysed reaction is anthranilate + NADH + O2 + 3 H(+) = catechol + NH4(+) + CO2 + NAD(+). The enzyme catalyses anthranilate + NADPH + O2 + 3 H(+) = catechol + NH4(+) + CO2 + NADP(+). Its pathway is aromatic compound metabolism; anthranilate degradation via hydroxylation; catechol from anthranilate: step 1/1. In terms of biological role, component of anthranilate dioxygenase multicomponent enzyme system which catalyzes the incorporation of both atoms of molecular oxygen into anthranilate to form catechol. The polypeptide is Anthranilate 1,2-dioxygenase small subunit (Acinetobacter baylyi (strain ATCC 33305 / BD413 / ADP1)).